Here is a 447-residue protein sequence, read N- to C-terminus: Argininosuccinate synthase (447 aa).

Residues 17 to 25 (AFSGGLDTS) and Ala43 contribute to the ATP site. Tyr99 contributes to the L-citrulline binding site. Positions 129 and 131 each coordinate ATP. Positions 131, 135, and 136 each coordinate L-aspartate. An L-citrulline-binding site is contributed by Asn135. Asp136 is an ATP binding site. 2 residues coordinate L-citrulline: Arg139 and Ser192. An ATP-binding site is contributed by Asp194. L-citrulline contacts are provided by Thr201, Glu203, and Glu280.

The protein belongs to the argininosuccinate synthase family. Type 2 subfamily. Homotetramer.

The protein localises to the cytoplasm. The enzyme catalyses L-citrulline + L-aspartate + ATP = 2-(N(omega)-L-arginino)succinate + AMP + diphosphate + H(+). It participates in amino-acid biosynthesis; L-arginine biosynthesis; L-arginine from L-ornithine and carbamoyl phosphate: step 2/3. The polypeptide is Argininosuccinate synthase (Paracidovorax citrulli (strain AAC00-1) (Acidovorax citrulli)).